A 570-amino-acid polypeptide reads, in one-letter code: MSSSGGGGVAEEVARLWGELPVRVVWAAVAAQWAAAAAAARAAVVVPAVRALVAVSLAMTVMILAEKLFVAAVCLAVRAFRLRPDRRYKWLPIGAAAAAASSEDDEESGLVAAAAAFPMVLVQIPMFNEREVYKLSIGAACSLDWPSDRVVIQVLDDSTDLVVKDLVEKECQKWQGKGVNIKYEVRGNRKGYKAGALKEGLKHDYVKECEYIAMFDADFQPESDFLLRTVPFLVHNSEIALVQTRWKFVNANECLLTRFQEMSLDYHFKYEQEAGSSVYSFFGFNGTAGVWRIAAIDDAGGWKDRTTVEDMDLAVRATLQGWKFVYVGDVKVKSELPSTFKAYRFQQHRWSCGPANLFKKMMVEILENKKVSFWNKIHLWYDFFFVGKIAAHTVTFIYYCFVIPVSVWLPEIEIPLWGVVYVPTVITLCKAVGTPSSFHLVILWVLFENVMSLHRIKAAVTGILEAGRVNEWVVTEKLGDANKTKPDTNGSDAVKVIDVELTTPLIPKLKKRRTRFWDKYHYSEIFVGICIILSGFYDVLYAKKGYYIFLFIQGLAFLIVGFDYIGVCPP.

Residues 57-77 traverse the membrane as a helical segment; sequence LAMTVMILAEKLFVAAVCLAV. The active site involves Asp-157. Substrate-binding residues include Asp-216 and Asp-218. Asp-310 is a catalytic residue. 4 consecutive transmembrane segments (helical) span residues 389 to 409, 412 to 432, 522 to 542, and 548 to 568; these read IAAHTVTFIYYCFVIPVSVWL, IEIPLWGVVYVPTVITLCKAV, YSEIFVGICIILSGFYDVLYA, and IFLFIQGLAFLIVGFDYIGVC.

This sequence belongs to the glycosyltransferase 2 family. Plant cellulose synthase-like A subfamily.

Its subcellular location is the golgi apparatus membrane. The enzyme catalyses GDP-mannose + (glucomannan)n = GDP + (glucomannan)n+1.. Its function is as follows. Probable mannan synthase which consists of a 4-beta-mannosyltransferase activity on mannan using GDP-mannose. The beta-1,4-mannan product is the backbone for galactomannan synthesis by galactomannan galactosyltransferase. Galactomannan is a noncellulosic polysaccharides of plant cell wall. The chain is Probable glucomannan 4-beta-mannosyltransferase 11 from Oryza sativa subsp. japonica (Rice).